The sequence spans 861 residues: Integrator complex subunit 6-like (861 aa).

Residues 3-227 form the VWFA domain; it reads ILLFLIDTSA…QCLESLVQKV (225 aa). The residue at position 617 (S617) is a Phosphoserine.

The sequence is that of Integrator complex subunit 6-like (Ints6l) from Mus musculus (Mouse).